A 172-amino-acid chain; its full sequence is uncharacterized protein (172 aa).

3 consecutive transmembrane segments (helical) span residues 7 to 27 (ILIS…CYGI), 59 to 79 (LMIF…LYLF), and 89 to 109 (FSLT…LFVK).

This sequence to M.jannaschii MJ0695.

It localises to the cell membrane. This is an uncharacterized protein from Methanocaldococcus jannaschii (strain ATCC 43067 / DSM 2661 / JAL-1 / JCM 10045 / NBRC 100440) (Methanococcus jannaschii).